A 94-amino-acid polypeptide reads, in one-letter code: Small ribosomal subunit protein uS19 (94 aa).

It belongs to the universal ribosomal protein uS19 family.

Protein S19 forms a complex with S13 that binds strongly to the 16S ribosomal RNA. In Anaplasma phagocytophilum (strain HZ), this protein is Small ribosomal subunit protein uS19.